A 260-amino-acid chain; its full sequence is uncharacterized protein (260 aa).

The first 22 residues, 1 to 22 (MGYLKGFALYISILILIVFIAG), serve as a signal peptide directing secretion. The N-palmitoyl cysteine moiety is linked to residue Cys-23. Residue Cys-23 is the site of S-diacylglycerol cysteine attachment.

It belongs to the staphylococcal tandem lipoprotein family.

The protein resides in the cell membrane. This is an uncharacterized protein from Staphylococcus aureus (strain MSSA476).